The chain runs to 262 residues: Hydroxyethylthiazole kinase (262 aa).

M50 serves as a coordination point for substrate. ATP is bound by residues R125 and T171. G198 lines the substrate pocket.

This sequence belongs to the Thz kinase family. The cofactor is Mg(2+).

It catalyses the reaction 5-(2-hydroxyethyl)-4-methylthiazole + ATP = 4-methyl-5-(2-phosphooxyethyl)-thiazole + ADP + H(+). Its pathway is cofactor biosynthesis; thiamine diphosphate biosynthesis; 4-methyl-5-(2-phosphoethyl)-thiazole from 5-(2-hydroxyethyl)-4-methylthiazole: step 1/1. Catalyzes the phosphorylation of the hydroxyl group of 4-methyl-5-beta-hydroxyethylthiazole (THZ). The sequence is that of Hydroxyethylthiazole kinase from Escherichia coli O17:K52:H18 (strain UMN026 / ExPEC).